Reading from the N-terminus, the 140-residue chain is ATP synthase epsilon chain (140 aa).

This sequence belongs to the ATPase epsilon chain family. F-type ATPases have 2 components, CF(1) - the catalytic core - and CF(0) - the membrane proton channel. CF(1) has five subunits: alpha(3), beta(3), gamma(1), delta(1), epsilon(1). CF(0) has three main subunits: a, b and c.

Its subcellular location is the cell inner membrane. Produces ATP from ADP in the presence of a proton gradient across the membrane. This Neisseria meningitidis serogroup C / serotype 2a (strain ATCC 700532 / DSM 15464 / FAM18) protein is ATP synthase epsilon chain.